Here is a 518-residue protein sequence, read N- to C-terminus: Putative succinate-semialdehyde dehydrogenase [NADP(+)] 2 (518 aa).

NADP(+)-binding positions include 157 to 158 (WN), 181 to 184 (KPDS), and 232 to 233 (GS). E254 functions as the Proton acceptor in the catalytic mechanism. L255 lines the NADP(+) pocket. The active-site Nucleophile is C288. E386 is an NADP(+) binding site.

The protein belongs to the aldehyde dehydrogenase family.

The catalysed reaction is succinate semialdehyde + NADP(+) + H2O = succinate + NADPH + 2 H(+). Its function is as follows. Catalyzes the NADP(+)-dependent oxidation of succinate semialdehyde to succinate. Although it has succinate semialdehyde dehydrogenase activity, is likely to act physiologically on a different aldehyde(s). The protein is Putative succinate-semialdehyde dehydrogenase [NADP(+)] 2 (gabD2) of Mycobacterium bovis (strain ATCC BAA-935 / AF2122/97).